Consider the following 260-residue polypeptide: UPF0246 protein Bcep1808_2308 (260 aa).

It belongs to the UPF0246 family.

The protein is UPF0246 protein Bcep1808_2308 of Burkholderia vietnamiensis (strain G4 / LMG 22486) (Burkholderia cepacia (strain R1808)).